Here is a 308-residue protein sequence, read N- to C-terminus: MSKLIYGLAGPTASGKTSLSILLAKKINAEIISVDSSLVYKGMDIGTAKPTLQEQDGIKHHLIDIIEPTGNFSVADFISSVNKLKKEIWARGREVLLVGGTMLYFKGLIEGLSALPESQAEIREALEYQKKAKGLQYLHQQLNEIDPQSAQKINPNDQQRIFRALEVIMISGKKYSELVKTSKVGGLDEDLKLCALVPNDRSILHKNIESRFRQMLDQGFLDEVQNLHKNPMLTKETTAIRSVGYRQAWEYLDGDISYDEFVKKGIVATRQLAKRQLTWIRNWQSSINIVAMENETKELDILKYFGYK.

ATP is bound at residue 10-17 (GPTASGKT). 12-17 (TASGKT) provides a ligand contact to substrate. 2 interaction with substrate tRNA regions span residues 35-38 (DSSL) and 159-163 (QRIFR).

It belongs to the IPP transferase family. In terms of assembly, monomer. Requires Mg(2+) as cofactor.

The enzyme catalyses adenosine(37) in tRNA + dimethylallyl diphosphate = N(6)-dimethylallyladenosine(37) in tRNA + diphosphate. Functionally, catalyzes the transfer of a dimethylallyl group onto the adenine at position 37 in tRNAs that read codons beginning with uridine, leading to the formation of N6-(dimethylallyl)adenosine (i(6)A). The sequence is that of tRNA dimethylallyltransferase from Francisella tularensis subsp. tularensis (strain FSC 198).